The following is a 175-amino-acid chain: Heme-dependent oxidative N-demethylase delta subunit (175 aa).

In terms of assembly, the heme-dependent oxidative N-demethylase (HODM) is a heterotetramer composed of a catalytic alpha subunit, a FMN/2Fe-2S-dependent oxidoreductase beta subunit, a gamma subunit with putative aminotransferase activity, and a delta subunit of unknown function.

Its function is as follows. Component of the heme-dependent oxidative N-demethylase (HODM) enzyme, that catalyzes the NADPH-dependent oxidation of dimethylamine (DMA) to methylamine (MA) and formaldehyde. Functions in bacterial methylated amine catabolism, linking alkylamine oxidation to the tetrahydrofolate C1 pool. The function of the delta subunit is unknown. This Ectopseudomonas mendocina (strain ymp) (Pseudomonas mendocina) protein is Heme-dependent oxidative N-demethylase delta subunit.